The chain runs to 534 residues: 2,3-bisphosphoglycerate-independent phosphoglycerate mutase (534 aa).

Residues Asp15 and Ser65 each contribute to the Mn(2+) site. Ser65 functions as the Phosphoserine intermediate in the catalytic mechanism. Substrate-binding positions include His126, 156-157 (RD), Arg188, Arg194, 260-263 (RPDR), and Lys333. Mn(2+) is bound by residues Asp400, His404, Asp441, His442, and His459.

The protein belongs to the BPG-independent phosphoglycerate mutase family. In terms of assembly, monomer. Mn(2+) is required as a cofactor.

It catalyses the reaction (2R)-2-phosphoglycerate = (2R)-3-phosphoglycerate. The protein operates within carbohydrate degradation; glycolysis; pyruvate from D-glyceraldehyde 3-phosphate: step 3/5. In terms of biological role, catalyzes the interconversion of 2-phosphoglycerate and 3-phosphoglycerate. This Acaryochloris marina (strain MBIC 11017) protein is 2,3-bisphosphoglycerate-independent phosphoglycerate mutase.